The primary structure comprises 156 residues: UPF0251 protein Sfum_2819 (156 aa).

The protein belongs to the UPF0251 family.

This chain is UPF0251 protein Sfum_2819, found in Syntrophobacter fumaroxidans (strain DSM 10017 / MPOB).